The sequence spans 352 residues: S-adenosylmethionine:tRNA ribosyltransferase-isomerase (352 aa).

It belongs to the QueA family. Monomer.

It localises to the cytoplasm. It catalyses the reaction 7-aminomethyl-7-carbaguanosine(34) in tRNA + S-adenosyl-L-methionine = epoxyqueuosine(34) in tRNA + adenine + L-methionine + 2 H(+). It participates in tRNA modification; tRNA-queuosine biosynthesis. Transfers and isomerizes the ribose moiety from AdoMet to the 7-aminomethyl group of 7-deazaguanine (preQ1-tRNA) to give epoxyqueuosine (oQ-tRNA). This is S-adenosylmethionine:tRNA ribosyltransferase-isomerase from Solibacter usitatus (strain Ellin6076).